A 982-amino-acid chain; its full sequence is Filament-like plant protein 4 (982 aa).

2 coiled-coil regions span residues 39–83 and 125–291; these read DQYT…VAKE and EDRA…RKKL. The segment at 311–333 is disordered; the sequence is DHRQDHRQRRSPVRPSSPLMSPM. The segment covering 323-333 has biased composition (low complexity); sequence VRPSSPLMSPM. Positions 345–401 form a coiled coil; that stretch reads DNMQKFHKENDLLTERLLAMEEETKMLKEALAKRNSELQVSRNLCAKTANRLQTLEA. A compositionally biased stretch (polar residues) spans 423–433; sequence QNASNPPSMAS. Disordered regions lie at residues 423-466 and 687-711; these read QNAS…AKIK and QKDS…PDDC. The stretch at 452 to 475 forms a coiled coil; that stretch reads ELSQSNKDKANAKIKKTESANQLE. The span at 457–466 shows a compositional bias: basic and acidic residues; that stretch reads NKDKANAKIK. Residues 693-705 show a composition bias toward polar residues; sequence EHYQNGCSQSSDS. A coiled-coil region spans residues 722-885; the sequence is ATCKFTTEEF…AECQETILLL (164 aa). Composition is skewed to polar residues over residues 896 to 910 and 918 to 943; these read TEQV…QQAL and ATST…NTMK. The disordered stretch occupies residues 896–982; sequence TEQVASSPSQ…FSRFFSTKAK (87 aa).

It belongs to the FPP family. Interacts with WPP/MAF proteins.

The chain is Filament-like plant protein 4 (FPP4) from Arabidopsis thaliana (Mouse-ear cress).